We begin with the raw amino-acid sequence, 515 residues long: 2,3-bisphosphoglycerate-independent phosphoglycerate mutase (515 aa).

Mn(2+) contacts are provided by aspartate 14 and serine 64. Serine 64 serves as the catalytic Phosphoserine intermediate. Substrate contacts are provided by residues histidine 125, 155–156 (RD), arginine 187, arginine 193, 263–266 (RADR), and lysine 337. Residues aspartate 404, histidine 408, aspartate 445, histidine 446, and histidine 464 each contribute to the Mn(2+) site.

The protein belongs to the BPG-independent phosphoglycerate mutase family. Monomer. The cofactor is Mn(2+).

It catalyses the reaction (2R)-2-phosphoglycerate = (2R)-3-phosphoglycerate. It functions in the pathway carbohydrate degradation; glycolysis; pyruvate from D-glyceraldehyde 3-phosphate: step 3/5. Catalyzes the interconversion of 2-phosphoglycerate and 3-phosphoglycerate. This Yersinia pseudotuberculosis serotype I (strain IP32953) protein is 2,3-bisphosphoglycerate-independent phosphoglycerate mutase.